A 337-amino-acid chain; its full sequence is Glyceraldehyde-3-phosphate dehydrogenase (337 aa).

Residues 11-12 (TI) and Gly110 contribute to the NAD(+) site. 139-141 (SCN) serves as a coordination point for D-glyceraldehyde 3-phosphate. Residue Cys140 is the Nucleophile of the active site. Arg168 is a binding site for NAD(+). Residue 194–195 (HG) coordinates D-glyceraldehyde 3-phosphate. Gln301 is an NAD(+) binding site.

It belongs to the glyceraldehyde-3-phosphate dehydrogenase family. In terms of assembly, homotetramer.

The protein localises to the cytoplasm. It catalyses the reaction D-glyceraldehyde 3-phosphate + phosphate + NADP(+) = (2R)-3-phospho-glyceroyl phosphate + NADPH + H(+). The enzyme catalyses D-glyceraldehyde 3-phosphate + phosphate + NAD(+) = (2R)-3-phospho-glyceroyl phosphate + NADH + H(+). Its pathway is carbohydrate degradation; glycolysis; pyruvate from D-glyceraldehyde 3-phosphate: step 1/5. The protein is Glyceraldehyde-3-phosphate dehydrogenase (gap) of Methanothermobacter thermautotrophicus (strain ATCC 29096 / DSM 1053 / JCM 10044 / NBRC 100330 / Delta H) (Methanobacterium thermoautotrophicum).